A 766-amino-acid polypeptide reads, in one-letter code: 5-methyltetrahydropteroyltriglutamate--homocysteine methyltransferase (766 aa).

5-methyltetrahydropteroyltri-L-glutamate is bound by residues 16-19 (RELK) and lysine 122. Residues 443 to 445 (IGS) and glutamate 496 each bind L-homocysteine. Residues 443–445 (IGS) and glutamate 496 contribute to the L-methionine site. 5-methyltetrahydropteroyltri-L-glutamate contacts are provided by residues 527 to 528 (RC) and tryptophan 573. Aspartate 611 provides a ligand contact to L-homocysteine. An L-methionine-binding site is contributed by aspartate 611. Glutamate 617 contacts 5-methyltetrahydropteroyltri-L-glutamate. 3 residues coordinate Zn(2+): histidine 653, cysteine 655, and glutamate 677. Residue histidine 706 is the Proton donor of the active site. Position 738 (cysteine 738) interacts with Zn(2+).

The protein belongs to the vitamin-B12 independent methionine synthase family. It depends on Zn(2+) as a cofactor.

It catalyses the reaction 5-methyltetrahydropteroyltri-L-glutamate + L-homocysteine = tetrahydropteroyltri-L-glutamate + L-methionine. Its pathway is amino-acid biosynthesis; L-methionine biosynthesis via de novo pathway; L-methionine from L-homocysteine (MetE route): step 1/1. In terms of biological role, catalyzes the transfer of a methyl group from 5-methyltetrahydrofolate to homocysteine resulting in methionine formation. This Pseudomonas putida (strain W619) protein is 5-methyltetrahydropteroyltriglutamate--homocysteine methyltransferase.